Consider the following 545-residue polypeptide: Esterase-5B (545 aa).

A signal peptide spans 1 to 19 (MYCAKLILLLGCFWISSSA). A disulfide bond links Cys-84 and Cys-103. The N-linked (GlcNAc...) asparagine glycan is linked to Asn-113. Residue Ser-207 is the Acyl-ester intermediate of the active site. Cys-259 and Cys-271 are disulfide-bonded. Asn-421 carries N-linked (GlcNAc...) asparagine glycosylation. Residue His-467 is the Charge relay system of the active site. A glycan (N-linked (GlcNAc...) asparagine) is linked at Asn-507. Cys-515 and Cys-536 are oxidised to a cystine.

Belongs to the type-B carboxylesterase/lipase family. In terms of assembly, homodimer.

The protein resides in the secreted. It catalyses the reaction a carboxylic ester + H2O = an alcohol + a carboxylate + H(+). The chain is Esterase-5B (Est-5B) from Drosophila persimilis (Fruit fly).